A 788-amino-acid chain; its full sequence is Ribosome biogenesis protein ERB1 (788 aa).

Positions 1 to 91 (MGDLKGSRKR…SKPIREKSKP (91 aa)) are disordered. Basic and acidic residues predominate over residues 38-50 (LSDKSHDTEHSSD). Residues 51–78 (SEIELVDDLSSDDGEEYEDEFDSDEIPS) are compositionally biased toward acidic residues. Residues 80-91 (IESKPIREKSKP) are compositionally biased toward basic and acidic residues. WD repeat units lie at residues 433–472 (GHSG…QIWS), 476–516 (SDEE…PEME), 613–651 (KGGG…LVKI), 654–699 (PGAR…RPYK), 703–742 (YHQK…DLLS), and 758–788 (TGEL…RLWT).

The protein belongs to the WD repeat BOP1/ERB1 family. Component of the NOP7 complex, composed of ERB1, NOP7 and YTM1. The complex is held together by ERB1, which interacts with NOP7 via its N-terminal domain and with YTM1 via a high-affinity interaction between the seven-bladed beta-propeller domains of the 2 proteins. The NOP7 complex associates with the 66S pre-ribosome.

It localises to the nucleus. Its subcellular location is the nucleolus. The protein localises to the nucleoplasm. In terms of biological role, component of the NOP7 complex, which is required for maturation of the 25S and 5.8S ribosomal RNAs and formation of the 60S ribosome. This Ajellomyces capsulatus (strain NAm1 / WU24) (Darling's disease fungus) protein is Ribosome biogenesis protein ERB1.